Reading from the N-terminus, the 216-residue chain is Protein Syd (216 aa).

This sequence belongs to the Syd family.

The protein resides in the cell inner membrane. Interacts with the SecY protein in vivo. May bind preferentially to an uncomplexed state of SecY, thus functioning either as a chelating agent for excess SecY in the cell or as a regulatory factor that negatively controls the translocase function. The sequence is that of Protein Syd from Shewanella sp. (strain MR-7).